Here is a 449-residue protein sequence, read N- to C-terminus: KICSTOR subunit 2 (449 aa).

The protein belongs to the KICS2 family. In terms of assembly, may be part of the KICSTOR complex.

It is found in the lysosome membrane. Functionally, as part of the KICSTOR complex may function in the amino acid-sensing branch of the TORC1 signaling pathway. In Danio rerio (Zebrafish), this protein is KICSTOR subunit 2 (kics2).